The chain runs to 223 residues: DNA mismatch repair protein MutH (223 aa).

This sequence belongs to the MutH family.

The protein localises to the cytoplasm. Its function is as follows. Sequence-specific endonuclease that cleaves unmethylated GATC sequences. It is involved in DNA mismatch repair. This is DNA mismatch repair protein MutH from Shewanella sp. (strain W3-18-1).